The primary structure comprises 586 residues: Aspartate--tRNA ligase (586 aa).

L-aspartate is bound at residue Glu171. Residues 195–198 (QLFK) form an aspartate region. Arg217 contacts L-aspartate. ATP is bound by residues 217–219 (RDE) and Gln226. His448 serves as a coordination point for L-aspartate. ATP is bound at residue Glu482. Arg489 is an L-aspartate binding site. Residue 534-537 (GLDR) coordinates ATP.

This sequence belongs to the class-II aminoacyl-tRNA synthetase family. Type 1 subfamily. Homodimer.

The protein resides in the cytoplasm. It carries out the reaction tRNA(Asp) + L-aspartate + ATP = L-aspartyl-tRNA(Asp) + AMP + diphosphate. Catalyzes the attachment of L-aspartate to tRNA(Asp) in a two-step reaction: L-aspartate is first activated by ATP to form Asp-AMP and then transferred to the acceptor end of tRNA(Asp). This Buchnera aphidicola subsp. Acyrthosiphon pisum (strain 5A) protein is Aspartate--tRNA ligase.